Here is a 294-residue protein sequence, read N- to C-terminus: Lipoprotein NlpI (294 aa).

Residues 1-18 (MKPFLRWCFVATALTLAG) form the signal peptide. Cys-19 is lipidated: N-palmitoyl cysteine. Cys-19 is lipidated: S-diacylglycerol cysteine. 3 TPR repeats span residues 62–95 (AQLLYERGVLYDSLGLRALARNDFSQALAIRPDM), 96–129 (PEVFNYLGIYLTQAGNFDAAYEAFDSVLELDPTY), and 234–267 (SETNFYLGKYYLSLGDSDSATALFKLAVANNVHN).

In terms of assembly, homodimer.

The protein resides in the cell membrane. Functionally, may be involved in cell division. May play a role in bacterial septation or regulation of cell wall degradation during cell division. In Shigella boydii serotype 4 (strain Sb227), this protein is Lipoprotein NlpI (nlpI).